We begin with the raw amino-acid sequence, 104 residues long: Large ribosomal subunit protein uL24 (104 aa).

Belongs to the universal ribosomal protein uL24 family. Part of the 50S ribosomal subunit.

One of two assembly initiator proteins, it binds directly to the 5'-end of the 23S rRNA, where it nucleates assembly of the 50S subunit. Functionally, one of the proteins that surrounds the polypeptide exit tunnel on the outside of the subunit. The chain is Large ribosomal subunit protein uL24 from Pectobacterium atrosepticum (strain SCRI 1043 / ATCC BAA-672) (Erwinia carotovora subsp. atroseptica).